Reading from the N-terminus, the 229-residue chain is Lipoprotein-releasing system ATP-binding protein LolD 1 (229 aa).

One can recognise an ABC transporter domain in the interval 2–229; the sequence is LVVSELSKSY…VRRGRFGITA (228 aa). 38-45 provides a ligand contact to ATP; sequence GPSGSGKT.

This sequence belongs to the ABC transporter superfamily. Lipoprotein translocase (TC 3.A.1.125) family. The complex is composed of two ATP-binding proteins (LolD) and two transmembrane proteins (LolC and LolE).

It is found in the cell inner membrane. In terms of biological role, part of the ABC transporter complex LolCDE involved in the translocation of mature outer membrane-directed lipoproteins, from the inner membrane to the periplasmic chaperone, LolA. Responsible for the formation of the LolA-lipoprotein complex in an ATP-dependent manner. In Rhodopirellula baltica (strain DSM 10527 / NCIMB 13988 / SH1), this protein is Lipoprotein-releasing system ATP-binding protein LolD 1.